The primary structure comprises 479 residues: NADH dehydrogenase [ubiquinone] flavoprotein 1, mitochondrial (479 aa).

103–112 contacts NADH; the sequence is GRGGAGFPSG. 216–264 is a binding site for FMN; it reads RGAGAYICGEETALIESIEGKQGKPRLKPPFPAMAGLYGCPTTVTNVET. [4Fe-4S] cluster is bound by residues cysteine 396, cysteine 399, cysteine 402, and cysteine 442.

This sequence belongs to the complex I 51 kDa subunit family. As to quaternary structure, complex I is composed of about 45 different subunits. This is a component of the flavoprotein-sulfur (FP) fragment of the enzyme. FMN is required as a cofactor. It depends on [4Fe-4S] cluster as a cofactor.

The protein localises to the mitochondrion inner membrane. The catalysed reaction is a ubiquinone + NADH + 5 H(+)(in) = a ubiquinol + NAD(+) + 4 H(+)(out). Core subunit of the mitochondrial membrane respiratory chain NADH dehydrogenase (Complex I) that is believed to belong to the minimal assembly required for catalysis. Complex I functions in the transfer of electrons from NADH to the respiratory chain. The immediate electron acceptor for the enzyme is believed to be ubiquinone. The polypeptide is NADH dehydrogenase [ubiquinone] flavoprotein 1, mitochondrial (ndufv1) (Dictyostelium discoideum (Social amoeba)).